A 485-amino-acid polypeptide reads, in one-letter code: Adenosylhomocysteinase (485 aa).

T64, D139, and E205 together coordinate substrate. Residue T206 to T208 coordinates NAD(+). Residues K235 and D239 each contribute to the substrate site. NAD(+)-binding positions include N240, G269–G274, E292, N327, I348–H350, and N397.

Belongs to the adenosylhomocysteinase family. It depends on NAD(+) as a cofactor.

The enzyme catalyses S-adenosyl-L-homocysteine + H2O = L-homocysteine + adenosine. The protein operates within amino-acid biosynthesis; L-homocysteine biosynthesis; L-homocysteine from S-adenosyl-L-homocysteine: step 1/1. Its function is as follows. Adenosylhomocysteine is a competitive inhibitor of S-adenosyl-L-methionine-dependent methyl transferase reactions; therefore adenosylhomocysteinase may play a key role in the control of methylations via regulation of the intracellular concentration of adenosylhomocysteine. This chain is Adenosylhomocysteinase (SAHH), found in Medicago sativa (Alfalfa).